A 462-amino-acid polypeptide reads, in one-letter code: Cytokine-like nuclear factor N-PAC (462 aa).

Residues 8 to 66 enclose the PWWP domain; sequence IGDLVWGKLGRYPPWPGKVVSPPKDLKKPRGKKCFFVKFFGTEDHAWIKVEQLKPYHPH. The span at 91 to 111 shows a compositional bias: basic and acidic residues; sequence KKAKGKDQSHSDDKSKSDKGR. The segment at 91 to 139 is disordered; the sequence is KKAKGKDQSHSDDKSKSDKGRKAAKPMKIIEEDDEDAFKGGSSDKPASS. Residues 169-462 are dehydrogenase domain; the sequence is GSITPTDKRI…MSAVYRAYIH (294 aa). Residues 179–193, Thr-270, and Lys-414 contribute to the NAD(+) site; that span reads GFLG…VVSN.

Belongs to the HIBADH-related family. NP60 subfamily. As to quaternary structure, homotetramere. Binds to mononucleosomes.

It localises to the nucleus. The protein resides in the chromosome. May have oxidoreductase activity. Regulates p38 MAP kinase activity by mediating stress activation of mapk14 and specifically regulating mapk14 signaling. In terms of biological role, cytokine-like nuclear factor with chromatin gene reader activity involved in chromatin modification and regulation of gene expression. Acts as a nucleosome-destabilizing factor that is recruited to genes during transcriptional activation. Recognizes and binds histone H3 without a preference for specific epigenetic markers and also binds DNA. Interacts with KDM1B and promotes its histone demethylase activity by facilitating the capture of H3 tails, they form a multifunctional enzyme complex that modifies transcribed chromatin and facilitates Pol II transcription through nucleosomes. The chain is Cytokine-like nuclear factor N-PAC (glyr1) from Danio rerio (Zebrafish).